The chain runs to 711 residues: Ribosomal RNA large subunit methyltransferase K/L (711 aa).

The region spanning 43–154 (TLYRTLLWSR…RENLVISLDL (112 aa)) is the THUMP domain.

This sequence belongs to the methyltransferase superfamily. RlmKL family.

The protein localises to the cytoplasm. The enzyme catalyses guanosine(2445) in 23S rRNA + S-adenosyl-L-methionine = N(2)-methylguanosine(2445) in 23S rRNA + S-adenosyl-L-homocysteine + H(+). The catalysed reaction is guanosine(2069) in 23S rRNA + S-adenosyl-L-methionine = N(2)-methylguanosine(2069) in 23S rRNA + S-adenosyl-L-homocysteine + H(+). Specifically methylates the guanine in position 2445 (m2G2445) and the guanine in position 2069 (m7G2069) of 23S rRNA. In Haemophilus influenzae (strain ATCC 51907 / DSM 11121 / KW20 / Rd), this protein is Ribosomal RNA large subunit methyltransferase K/L.